We begin with the raw amino-acid sequence, 259 residues long: uncharacterized protein (259 aa).

This sequence belongs to the BtpA family.

This is an uncharacterized protein from Pyrococcus abyssi (strain GE5 / Orsay).